The chain runs to 584 residues: Insulin-like growth factor 2 mRNA-binding protein 3 (584 aa).

RRM domains are found at residues 2 to 75 (NKLY…HSVP) and 81 to 156 (RKLQ…YIPD). Residues 160-199 (AQQPPQQHPQGRRGFGQRGPPRQGSPSATTRQKPQSDVPL) are disordered. Polar residues predominate over residues 184–194 (SPSATTRQKPQ). KH domains are found at residues 196-261 (DVPL…CKII), 277-344 (EIPL…EEEI), 409-474 (SETV…QGRI), and 491-557 (KLEA…QRKI).

It belongs to the RRM IMP/VICKZ family. In terms of assembly, homodimer and multimer.

The protein resides in the cytoplasm. The protein localises to the nucleus. Its subcellular location is the P-body. It is found in the stress granule. Its function is as follows. RNA-binding factor that may recruit target transcripts to cytoplasmic protein-RNA complexes (mRNPs). This transcript 'caging' into mRNPs allows mRNA transport and transient storage. It also modulates the rate and location at which target transcripts encounter the translational apparatus and shields them from endonuclease attacks or microRNA-mediated degradation. Preferentially binds to N6-methyladenosine (m6A)-containing mRNAs and increases their stability. In Gallus gallus (Chicken), this protein is Insulin-like growth factor 2 mRNA-binding protein 3 (IGF2BP3).